Reading from the N-terminus, the 195-residue chain is CASP-like protein 1B1 (195 aa).

Over 1-15 (MAKLALAATSGKSCK) the chain is Cytoplasmic. A helical transmembrane segment spans residues 16–36 (ILLGLRLLAFSATLSAAIVMG). The Extracellular segment spans residues 37 to 67 (LNKETETFVVGKVGNTPIKATFTAKFDHTPA). A helical membrane pass occupies residues 68-88 (FVFFVVANAMVSFHNLLMIAL). At 89-104 (QIFGGKMEFTGFRLLS) the chain is on the cytoplasmic side. A helical transmembrane segment spans residues 105 to 125 (VAILDMLNVTLISAAANAAAF). The Extracellular segment spans residues 126-154 (MAEVGKNGNKHARWDKICDRFATYCDHGA). Residues 155 to 175 (GALIAAFAGVILMLIISAASI) traverse the membrane as a helical segment. At 176 to 195 (SRLAQQNKCCSTTASPSVVP) the chain is on the cytoplasmic side.

It belongs to the Casparian strip membrane proteins (CASP) family. Homodimer and heterodimers.

The protein localises to the cell membrane. The chain is CASP-like protein 1B1 from Arabidopsis lyrata subsp. lyrata (Lyre-leaved rock-cress).